Consider the following 51-residue polypeptide: Defensin (51 aa).

Disulfide bonds link Cys3–Cys31, Cys17–Cys36, and Cys21–Cys38. A Phenylalanine amide modification is found at Phe51.

The protein localises to the secreted. Functionally, antibacterial peptide against Gram-positive and Gram-negative bacteria and fungi. This is Defensin from Bombus pascuorum (Common carder bumblebee).